The chain runs to 194 residues: NADH-quinone oxidoreductase subunit B (194 aa).

Cys-72, Cys-73, Cys-137, and Cys-167 together coordinate [4Fe-4S] cluster.

This sequence belongs to the complex I 20 kDa subunit family. As to quaternary structure, NDH-1 is composed of 14 different subunits. Subunits NuoB, C, D, E, F, and G constitute the peripheral sector of the complex. The cofactor is [4Fe-4S] cluster.

The protein localises to the cell inner membrane. The catalysed reaction is a quinone + NADH + 5 H(+)(in) = a quinol + NAD(+) + 4 H(+)(out). In terms of biological role, NDH-1 shuttles electrons from NADH, via FMN and iron-sulfur (Fe-S) centers, to quinones in the respiratory chain. Couples the redox reaction to proton translocation (for every two electrons transferred, four hydrogen ions are translocated across the cytoplasmic membrane), and thus conserves the redox energy in a proton gradient. The sequence is that of NADH-quinone oxidoreductase subunit B from Granulibacter bethesdensis (strain ATCC BAA-1260 / CGDNIH1).